A 52-amino-acid polypeptide reads, in one-letter code: Transcriptional regulator SlrA (52 aa).

Residues 1–38 enclose the Sin domain; the sequence is MKTHVKKDLDKGWHMLIQEARSIGLGIHDVRQFLESET.

As to quaternary structure, component of the SlrR/SlrA complex.

In terms of biological role, required specifically for induction of eps and yqxM operons by antagonizing SinR. Regulates SlrR activity. Controls the initiation of biofilm formation. The sequence is that of Transcriptional regulator SlrA (slrA) from Bacillus subtilis (strain 168).